We begin with the raw amino-acid sequence, 435 residues long: Transcription factor gkaF (435 aa).

The span at 1–19 (MGRPQRGDTAKERRERQDK) shows a compositional bias: basic and acidic residues. 3 disordered regions span residues 1-40 (MGRP…TVDW), 115-158 (STTA…SSQS), and 231-257 (FSSE…FLAP). The span at 28–40 (PISQSGLSDTVDW) shows a compositional bias: polar residues. Residues 143 to 158 (SQSSDSSKPSSTSSQS) show a composition bias toward low complexity.

It is found in the nucleus. Functionally, transcription factor; part of the gene cluster that mediates the biosynthesis of GKK1032, fungal natural products containing a macrocyclic para-cyclophane connected to a decahydrofluorene ring system that show potent antitumor activities. This is Transcription factor gkaF from Penicillium citrinum.